A 479-amino-acid polypeptide reads, in one-letter code: Trigger factor (479 aa).

The region spanning G174–P261 is the PPIase FKBP-type domain. The segment at K437 to S479 is disordered. The span at K453–K466 shows a compositional bias: basic residues. The span at A467–S479 shows a compositional bias: basic and acidic residues.

Belongs to the FKBP-type PPIase family. Tig subfamily.

It localises to the cytoplasm. The enzyme catalyses [protein]-peptidylproline (omega=180) = [protein]-peptidylproline (omega=0). Functionally, involved in protein export. Acts as a chaperone by maintaining the newly synthesized protein in an open conformation. Functions as a peptidyl-prolyl cis-trans isomerase. The sequence is that of Trigger factor from Prochlorococcus marinus (strain MIT 9303).